The following is a 264-amino-acid chain: 3-methyl-2-oxobutanoate hydroxymethyltransferase (264 aa).

Positions 45 and 84 each coordinate Mg(2+). Residues Asp45–Ser46, Asp84, and Lys112 contribute to the 3-methyl-2-oxobutanoate site. Glu114 provides a ligand contact to Mg(2+). Catalysis depends on Glu181, which acts as the Proton acceptor.

It belongs to the PanB family. Homodecamer; pentamer of dimers. Mg(2+) serves as cofactor.

It is found in the cytoplasm. It carries out the reaction 3-methyl-2-oxobutanoate + (6R)-5,10-methylene-5,6,7,8-tetrahydrofolate + H2O = 2-dehydropantoate + (6S)-5,6,7,8-tetrahydrofolate. It functions in the pathway cofactor biosynthesis; (R)-pantothenate biosynthesis; (R)-pantoate from 3-methyl-2-oxobutanoate: step 1/2. In terms of biological role, catalyzes the reversible reaction in which hydroxymethyl group from 5,10-methylenetetrahydrofolate is transferred onto alpha-ketoisovalerate to form ketopantoate. The chain is 3-methyl-2-oxobutanoate hydroxymethyltransferase from Shewanella piezotolerans (strain WP3 / JCM 13877).